Reading from the N-terminus, the 222-residue chain is Cytidylate kinase (222 aa).

Residue 10–18 (GPAGSGKSS) participates in ATP binding.

This sequence belongs to the cytidylate kinase family. Type 1 subfamily.

Its subcellular location is the cytoplasm. It carries out the reaction CMP + ATP = CDP + ADP. The enzyme catalyses dCMP + ATP = dCDP + ADP. This is Cytidylate kinase from Acholeplasma laidlawii (strain PG-8A).